An 842-amino-acid polypeptide reads, in one-letter code: DNA topoisomerase-like protein cin-4 (842 aa).

Basic and acidic residues predominate over residues 1–26; the sequence is MSEEDRNVFTSIDKKGGGSKQMDDLN. The interval 1-50 is disordered; it reads MSEEDRNVFTSIDKKGGGSKQMDDLNQKCPKRKTSKLKGIPKLEDANDAG. Residues 314 to 783 enclose the Topo IIA-type catalytic domain; it reads IPCLVDGLKP…TWQDLWITDL (470 aa).

It belongs to the type II topoisomerase family.

Plays a role in the removal of cohesin from kinetochores on mitotic chromosomes and is required for centromere resolution. The sequence is that of DNA topoisomerase-like protein cin-4 from Caenorhabditis elegans.